The primary structure comprises 736 residues: Catalase-peroxidase (736 aa).

The segment at residues 96-224 (WHSAGTYRTG…LAAVQMGLIY (129 aa)) is a cross-link (tryptophyl-tyrosyl-methioninium (Trp-Tyr) (with M-250)). His-97 functions as the Proton acceptor in the catalytic mechanism. Residues 224–250 (YVNPEGPDGNPDPVASGRDVRETFGRM) constitute a cross-link (tryptophyl-tyrosyl-methioninium (Tyr-Met) (with W-96)). A heme b-binding site is contributed by His-265.

It belongs to the peroxidase family. Peroxidase/catalase subfamily. In terms of assembly, homodimer or homotetramer. Heme b serves as cofactor. Formation of the three residue Trp-Tyr-Met cross-link is important for the catalase, but not the peroxidase activity of the enzyme.

It catalyses the reaction H2O2 + AH2 = A + 2 H2O. The catalysed reaction is 2 H2O2 = O2 + 2 H2O. In terms of biological role, bifunctional enzyme with both catalase and broad-spectrum peroxidase activity. The protein is Catalase-peroxidase of Pelobacter propionicus (strain DSM 2379 / NBRC 103807 / OttBd1).